The primary structure comprises 79 residues: RNA-binding protein Hfq (79 aa).

A Sm domain is found at 10-70; that stretch reads DAFLNHVRKT…ISTIMPAQPI (61 aa).

The protein belongs to the Hfq family. As to quaternary structure, homohexamer.

Its function is as follows. RNA chaperone that binds small regulatory RNA (sRNAs) and mRNAs to facilitate mRNA translational regulation in response to envelope stress, environmental stress and changes in metabolite concentrations. Also binds with high specificity to tRNAs. The chain is RNA-binding protein Hfq from Ruegeria sp. (strain TM1040) (Silicibacter sp.).